The sequence spans 387 residues: Probable peptidoglycan glycosyltransferase FtsW (387 aa).

A run of 9 helical transmembrane segments spans residues 19–39 (LDFS…VMVA), 61–81 (ITFL…PMSV), 86–106 (SGLL…PGIG), 118–138 (LGPF…VYFA), 161–181 (VLLI…SVVI), 199–219 (FLLL…ASPY), 286–306 (FIGA…LVIL), 320–340 (YVVF…MGVA), and 352–372 (PFIS…ALVF).

The protein belongs to the SEDS family. FtsW subfamily.

Its subcellular location is the cell inner membrane. It catalyses the reaction [GlcNAc-(1-&gt;4)-Mur2Ac(oyl-L-Ala-gamma-D-Glu-L-Lys-D-Ala-D-Ala)](n)-di-trans,octa-cis-undecaprenyl diphosphate + beta-D-GlcNAc-(1-&gt;4)-Mur2Ac(oyl-L-Ala-gamma-D-Glu-L-Lys-D-Ala-D-Ala)-di-trans,octa-cis-undecaprenyl diphosphate = [GlcNAc-(1-&gt;4)-Mur2Ac(oyl-L-Ala-gamma-D-Glu-L-Lys-D-Ala-D-Ala)](n+1)-di-trans,octa-cis-undecaprenyl diphosphate + di-trans,octa-cis-undecaprenyl diphosphate + H(+). The protein operates within cell wall biogenesis; peptidoglycan biosynthesis. Functionally, peptidoglycan polymerase that is essential for cell division. This chain is Probable peptidoglycan glycosyltransferase FtsW, found in Saccharophagus degradans (strain 2-40 / ATCC 43961 / DSM 17024).